The chain runs to 185 residues: ATP synthase subunit delta, chloroplastic (185 aa).

This sequence belongs to the ATPase delta chain family. As to quaternary structure, F-type ATPases have 2 components, F(1) - the catalytic core - and F(0) - the membrane proton channel. F(1) has five subunits: alpha(3), beta(3), gamma(1), delta(1), epsilon(1). CF(0) has four main subunits: a(1), b(1), b'(1) and c(10-14). The alpha and beta chains form an alternating ring which encloses part of the gamma chain. F(1) is attached to F(0) by a central stalk formed by the gamma and epsilon chains, while a peripheral stalk is formed by the delta, b and b' chains.

It localises to the plastid. It is found in the chloroplast thylakoid membrane. In terms of biological role, f(1)F(0) ATP synthase produces ATP from ADP in the presence of a proton or sodium gradient. F-type ATPases consist of two structural domains, F(1) containing the extramembraneous catalytic core and F(0) containing the membrane proton channel, linked together by a central stalk and a peripheral stalk. During catalysis, ATP synthesis in the catalytic domain of F(1) is coupled via a rotary mechanism of the central stalk subunits to proton translocation. Its function is as follows. This protein is part of the stalk that links CF(0) to CF(1). It either transmits conformational changes from CF(0) to CF(1) or is implicated in proton conduction. This chain is ATP synthase subunit delta, chloroplastic, found in Guillardia theta (Cryptophyte).